The chain runs to 318 residues: Aspartate carbamoyltransferase catalytic subunit (318 aa).

Positions 59 and 60 each coordinate carbamoyl phosphate. An L-aspartate-binding site is contributed by K87. R109, H137, and Q140 together coordinate carbamoyl phosphate. Positions 170 and 224 each coordinate L-aspartate. Positions 265 and 266 each coordinate carbamoyl phosphate.

It belongs to the aspartate/ornithine carbamoyltransferase superfamily. ATCase family. As to quaternary structure, heterododecamer (2C3:3R2) of six catalytic PyrB chains organized as two trimers (C3), and six regulatory PyrI chains organized as three dimers (R2).

The enzyme catalyses carbamoyl phosphate + L-aspartate = N-carbamoyl-L-aspartate + phosphate + H(+). It functions in the pathway pyrimidine metabolism; UMP biosynthesis via de novo pathway; (S)-dihydroorotate from bicarbonate: step 2/3. In terms of biological role, catalyzes the condensation of carbamoyl phosphate and aspartate to form carbamoyl aspartate and inorganic phosphate, the committed step in the de novo pyrimidine nucleotide biosynthesis pathway. The chain is Aspartate carbamoyltransferase catalytic subunit from Rhizobium etli (strain ATCC 51251 / DSM 11541 / JCM 21823 / NBRC 15573 / CFN 42).